We begin with the raw amino-acid sequence, 255 residues long: Small ribosomal subunit protein uS2 (255 aa).

The protein belongs to the universal ribosomal protein uS2 family.

This is Small ribosomal subunit protein uS2 from Geotalea daltonii (strain DSM 22248 / JCM 15807 / FRC-32) (Geobacter daltonii).